Here is a 147-residue protein sequence, read N- to C-terminus: uncharacterized protein (147 aa).

The 137-residue stretch at 1 to 137 (MRDNTIGSLI…LYELMTKVHK (137 aa)) folds into the HTH marR-type domain. Positions 53–76 (QMELAEKVTVTQGGISRMLTRLEK) form a DNA-binding region, H-T-H motif.

This is an uncharacterized protein from Bacillus anthracis.